The following is a 1427-amino-acid chain: Protein expanded (1427 aa).

An FERM domain is found at Arg26 to Ala399. The tract at residues Gly176 to Lys212 is disordered. The span at Glu192–Pro211 shows a compositional bias: polar residues. Phosphotyrosine occurs at positions 227 and 423. 2 disordered regions span residues Val520–Gln566 and Asn611–Tyr656. Positions Asp524–Gly544 are enriched in polar residues. The span at Thr545–Ser559 shows a compositional bias: low complexity. At Tyr679 the chain carries Phosphotyrosine. The span at Glu688 to Ser710 shows a compositional bias: basic and acidic residues. 5 disordered regions span residues Glu688–His732, Tyr766–Arg792, Ala815–Ser880, His939–Ser963, and Leu1000–Leu1022. Tyr766 carries the phosphotyrosine modification. Over residues Pro818 to Ala838 the composition is skewed to pro residues. An RXPPXY motif motif is present at residues Arg842–Tyr847. Residues Ser848 to Ile859 are compositionally biased toward polar residues. Residues Ser860 to Ser877 are compositionally biased toward low complexity. Positions Leu951–Ser963 are enriched in basic residues. Residues Ala1001–His1019 are compositionally biased toward pro residues. The SH3-binding signature appears at Pro1008–Pro1020. Position 1103 is a phosphotyrosine (Tyr1103). The SH3-binding signature appears at Pro1149 to Pro1157. Ser1181 is modified (phosphoserine). Disordered stretches follow at residues Asp1190–Glu1267 and Thr1345–Gln1398. Composition is skewed to pro residues over residues Pro1214–Pro1230 and Pro1237–Leu1246. Composition is skewed to polar residues over residues Ser1253–Ala1262 and Thr1345–Gly1370. Residues Lys1376 to Pro1388 show a composition bias toward basic residues.

Forms a complex with Kibra and Mer. Interacts (via RXPPXY motif) with Kibra (via domain WW 1). Interacts with Mer and Hpo (via SARAH domain). Interacts with Schip1; the interaction results in recruitment of Schip1 to the apical cell membrane. Interacts with ack and yki. Phosphorylated by Ack at several tyrosines including Tyr-227, Tyr-423, Tyr-679, Tyr-766 and Tyr-1103.

It localises to the apical cell membrane. Functionally, activates the Hippo/SWH (Sav/Wts/Hpo) signaling pathway, a signaling pathway that plays a pivotal role in organ size control and tumor suppression by restricting proliferation and promoting apoptosis. The core of this pathway is composed of a kinase cascade wherein Hippo (Hpo), in complex with its regulatory protein Salvador (Sav), phosphorylates and activates Warts (Wts) in complex with its regulatory protein Mats, which in turn phosphorylates and inactivates the Yorkie (Yki) oncoprotein. Ex acts synergistically along with Mer and Kibra to regulate the Hippo signaling pathway. Involved in the control of cell proliferation in imaginal disks. May bind to certain proteins of signal transduction pathways by interaction with their SH3 domains. Required for apical localization of Schip1. This is Protein expanded (ex) from Drosophila melanogaster (Fruit fly).